Consider the following 264-residue polypeptide: Putative serine carboxypeptidase-like 53 (264 aa).

The signal sequence occupies residues 1–23 (MGKLQDWSITTCLFLFFLHASQT). 4 N-linked (GlcNAc...) asparagine glycosylation sites follow: Asn65, Asn101, Asn153, and Asn184.

The protein belongs to the peptidase S10 family.

It is found in the secreted. The chain is Putative serine carboxypeptidase-like 53 (SCPL53) from Arabidopsis thaliana (Mouse-ear cress).